A 198-amino-acid chain; its full sequence is Peptidyl-tRNA hydrolase (198 aa).

TRNA is bound at residue tyrosine 18. The active-site Proton acceptor is the histidine 23. Tyrosine 69, asparagine 71, and asparagine 117 together coordinate tRNA.

It belongs to the PTH family. Monomer.

Its subcellular location is the cytoplasm. The catalysed reaction is an N-acyl-L-alpha-aminoacyl-tRNA + H2O = an N-acyl-L-amino acid + a tRNA + H(+). Its function is as follows. Hydrolyzes ribosome-free peptidyl-tRNAs (with 1 or more amino acids incorporated), which drop off the ribosome during protein synthesis, or as a result of ribosome stalling. In terms of biological role, catalyzes the release of premature peptidyl moieties from peptidyl-tRNA molecules trapped in stalled 50S ribosomal subunits, and thus maintains levels of free tRNAs and 50S ribosomes. In Aeromonas hydrophila subsp. hydrophila (strain ATCC 7966 / DSM 30187 / BCRC 13018 / CCUG 14551 / JCM 1027 / KCTC 2358 / NCIMB 9240 / NCTC 8049), this protein is Peptidyl-tRNA hydrolase.